The chain runs to 682 residues: Protein PilJ (682 aa).

The Cytoplasmic segment spans residues 1–14; that stretch reads MKKINAGNLFAGMR. A helical membrane pass occupies residues 15 to 38; sequence SSSVIAGLFIVLIVSIVLLFANFA. Residues 39 to 306 are Periplasmic-facing; the sequence is YLNTQSNHDK…DGFENLAGGR (268 aa). Residues 307–333 form a helical membrane-spanning segment; that stretch reads SINLFAGYALGALALASIILIGLVMVR. Residues 334–682 are Cytoplasmic-facing; the sequence is ETNRRLAETA…FKLPEGVEQA (349 aa). The HAMP domain maps to 347–398; that stretch reads DRNQAAILRLLDEIADLADGDLTVAATVTEDFTGAIADSINYSIDQLRELVE. The 237-residue stretch at 403–639 folds into the Methyl-accepting transducer domain; the sequence is TAVQVAAAAQ…HISNTMNVIQ (237 aa).

The protein belongs to the methyl-accepting chemotaxis (MCP) protein family.

It localises to the cell inner membrane. Functionally, may be a part of a signal-transduction system that regulates twitching motility by controlling pilus function (extension and retraction). This chain is Protein PilJ (pilJ), found in Pseudomonas aeruginosa (strain ATCC 15692 / DSM 22644 / CIP 104116 / JCM 14847 / LMG 12228 / 1C / PRS 101 / PAO1).